We begin with the raw amino-acid sequence, 129 residues long: Photosystem II reaction center Psb28 protein (129 aa).

A disordered region spans residues 110 to 129; the sequence is GLGYSNNSGNNEGADEASEG.

Belongs to the Psb28 family. As to quaternary structure, part of the photosystem II complex.

It localises to the cellular thylakoid membrane. The sequence is that of Photosystem II reaction center Psb28 protein from Synechococcus sp. (strain WH7803).